We begin with the raw amino-acid sequence, 173 residues long: ATP-dependent protease subunit HslV (173 aa).

T2 is an active-site residue. Residues G158, D161, and T164 each coordinate Na(+).

It belongs to the peptidase T1B family. HslV subfamily. As to quaternary structure, a double ring-shaped homohexamer of HslV is capped on each side by a ring-shaped HslU homohexamer. The assembly of the HslU/HslV complex is dependent on binding of ATP.

It localises to the cytoplasm. It catalyses the reaction ATP-dependent cleavage of peptide bonds with broad specificity.. With respect to regulation, allosterically activated by HslU binding. In terms of biological role, protease subunit of a proteasome-like degradation complex believed to be a general protein degrading machinery. This is ATP-dependent protease subunit HslV from Actinobacillus succinogenes (strain ATCC 55618 / DSM 22257 / CCUG 43843 / 130Z).